The following is a 129-amino-acid chain: Protein Turandot C (129 aa).

An N-terminal signal peptide occupies residues 1-21 (MNASISLLCLALLLISPFCLG).

This sequence belongs to the Turandot family.

Its subcellular location is the secreted. A humoral factor that may play a role in stress tolerance. This chain is Protein Turandot C, found in Drosophila melanogaster (Fruit fly).